Reading from the N-terminus, the 298-residue chain is Bifunctional protein FolD (298 aa).

NADP(+)-binding positions include 165–167 (GRS), serine 190, and isoleucine 231.

The protein belongs to the tetrahydrofolate dehydrogenase/cyclohydrolase family. As to quaternary structure, homodimer.

The enzyme catalyses (6R)-5,10-methylene-5,6,7,8-tetrahydrofolate + NADP(+) = (6R)-5,10-methenyltetrahydrofolate + NADPH. The catalysed reaction is (6R)-5,10-methenyltetrahydrofolate + H2O = (6R)-10-formyltetrahydrofolate + H(+). It functions in the pathway one-carbon metabolism; tetrahydrofolate interconversion. Its function is as follows. Catalyzes the oxidation of 5,10-methylenetetrahydrofolate to 5,10-methenyltetrahydrofolate and then the hydrolysis of 5,10-methenyltetrahydrofolate to 10-formyltetrahydrofolate. This Prochlorococcus marinus (strain MIT 9312) protein is Bifunctional protein FolD.